Here is a 703-residue protein sequence, read N- to C-terminus: Calpain-8 (703 aa).

The region spanning 45–344 is the Calpain catalytic domain; sequence LFKDPEFPAC…YSRLEICNLS (300 aa). Residues C105, H262, and N286 contribute to the active site. The segment at 355-512 is domain III; that stretch reads KWNLVLFNGR…VFSEKKAKAL (158 aa). Residues 513–531 form a linker region; sequence EIGDTVSGHPHEPHPRDMD. 4 consecutive EF-hand domains span residues 532–566, 575–608, 605–640, and 670–703; these read EEDE…VLSK, FNIN…LKIR, LKIR…AGFT, and IRLE…CVLV. The interval 532–703 is domain IV; sequence EEDEHVRSLF…LAEWLCCVLV (172 aa). Residues D588, D590, T592, S594, E599, D618, N620, T624, and E629 each contribute to the Ca(2+) site.

This sequence belongs to the peptidase C2 family. Monomer and homooligomer. Interacts with COPS1/GPS1, COPB1, EYA2, NME2, NME4 and TOMM70. Ca(2+) serves as cofactor. Post-translationally, undergoes autolytic cleavage between Ala-5 and Ala-6 which gives rise to fragments extending from Ala-6 to the C-terminus, Ala-6 to the EF-hand 2 domain and from Ala-6 to the beginning of domain III. As to expression, predominantly expressed in the stomach. Localizes strictly to the surface mucus cells in the gastric epithelium and the mucus-secreting goblet cells in the duodenum. Detected in the pituitary after estrogen stimulation.

It localises to the cytoplasm. Its subcellular location is the golgi apparatus. The enzyme catalyses Broad endopeptidase specificity.. Calcium-regulated non-lysosomal thiol-protease. Involved in membrane trafficking in the gastric surface mucus cells (pit cells) and may involve the membrane trafficking of mucus cells via interactions with coat protein. Proteolytically cleaves the beta-subunit of coatomer complex. This Rattus norvegicus (Rat) protein is Calpain-8 (Capn8).